The sequence spans 387 residues: MELNTLKSTFINNFGKEPNSLFFSPGRINLIGEHIDYNGGFVFPCPITLGTFAAATLRDDRICRAYSLNFESLGVIEFSLDDLSYKKEDNWTNYLKGVLKVLIEKGYKIDKGIDLVINGNLPNGAGLSSSASLEMLIVKILDTFFSLNISKVDAALIGKEVENTYIGVNSGIMDQFAISLGEKDKAILLDCNSLYYEYVPLNLGDNSIIIMNTNKRRELADSKYNERRKECDDSLDTLKKYTNISSLCELTSLEFETYKDKIEDSNKLRRCVHAISENERVKDAVKALKENNLELFGQLMNQSHISLRDDYEVTGKELDTLAENAWKQPGVLGARMTGAGFGGCAIAIVNNNHVDEFIKNVGQAYKDAIGYEASFYVASIGNGPTEL.

33–36 (EHID) provides a ligand contact to substrate. ATP contacts are provided by residues Ser-67 and 124–130 (GAGLSSS). Mg(2+) is bound by residues Ser-130 and Glu-162. The active-site Proton acceptor is Asp-174. Tyr-224 is a binding site for substrate.

It belongs to the GHMP kinase family. GalK subfamily.

It localises to the cytoplasm. It catalyses the reaction alpha-D-galactose + ATP = alpha-D-galactose 1-phosphate + ADP + H(+). It participates in carbohydrate metabolism; galactose metabolism. Functionally, catalyzes the transfer of the gamma-phosphate of ATP to D-galactose to form alpha-D-galactose-1-phosphate (Gal-1-P). The protein is Galactokinase of Clostridium perfringens (strain SM101 / Type A).